The primary structure comprises 1098 residues: Platelet-derived growth factor receptor beta (1098 aa).

The signal sequence occupies residues 1-31; the sequence is MGLPGVIPALVLRGQLLLSVLWLLGPQTSRG. Over 32–531 the chain is Extracellular; it reads LVITPPGPEF…VVPHSLPFKV (500 aa). Ig-like C2-type domains follow at residues 33–119, 128–209, 213–308, 330–402, and 415–523; these read VITP…YIFV, PMDS…YSLQ, INVS…INIS, HRSR…HEDD, and PVRV…VTVV. 3 N-linked (GlcNAc...) asparagine glycosylation sites follow: N44, N88, and N102. C53 and C99 are disulfide-bonded. A disulfide bridge connects residues C148 and C189. The N-linked (GlcNAc...) asparagine glycan is linked to N214. C234 and C290 are oxidised to a cystine. N-linked (GlcNAc...) asparagine glycans are attached at residues N291, N306, N353, N370, N444, N467, and N478. A disulfide bridge connects residues C435 and C507. A helical membrane pass occupies residues 532–552; that stretch reads VVISAILALVVLTVISLIILI. Residues 553–1098 lie on the Cytoplasmic side of the membrane; the sequence is MLWQKKPRYE…PLAEAEDSFL (546 aa). A phosphotyrosine; by autocatalysis mark is found at Y561, Y578, and Y580. The Protein kinase domain occupies 599–961; that stretch reads LVLGRTLGSG…QLVLLLERLL (363 aa). ATP contacts are provided by residues 605–613 and K633; that span reads LGSGAFGQV. Y685 bears the Phosphotyrosine; by ABL1 and ABL2 mark. Residues Y715, Y739, Y750, Y762, Y770, Y774, and Y777 each carry the phosphotyrosine; by autocatalysis modification. The Proton acceptor role is filled by D825. At Y856 the chain carries Phosphotyrosine; by autocatalysis. Phosphotyrosine; by ABL1 and ABL2 occurs at positions 933 and 969. Y1008 and Y1020 each carry phosphotyrosine; by autocatalysis. Positions 1016–1098 are disordered; it reads SDNDYIIPLP…PLAEAEDSFL (83 aa). The segment covering 1042-1059 has biased composition (polar residues); it reads SLASSTLNEVNTSSTISC. The span at 1062–1082 shows a compositional bias: low complexity; sequence PLELQEEPQQAEPEAQLEQPQ.

This sequence belongs to the protein kinase superfamily. Tyr protein kinase family. CSF-1/PDGF receptor subfamily. Interacts with homodimeric PDGFB and PDGFD, and with heterodimers formed by PDGFA and PDGFB. May also interact with homodimeric PDGFC. Monomer in the absence of bound ligand. Interaction with homodimeric PDGFB, heterodimers formed by PDGFA and PDGFB or homodimeric PDGFD, leads to receptor dimerization, where both PDGFRA homodimers and heterodimers with PDGFRB are observed. Interacts with SH2B2/APS. Interacts directly (tyrosine phosphorylated) with SHB. Interacts (tyrosine phosphorylated) with PIK3R1 and RASA1. Interacts (tyrosine phosphorylated) with CBL. Interacts (tyrosine phosphorylated) with SRC and SRC family kinases. Interacts (tyrosine phosphorylated) with PIK3C2B, maybe indirectly. Interacts (tyrosine phosphorylated) with SHC1, GRB7, GRB10 and NCK1. Interaction with GRB2 is mediated by SHC1. Interacts (via C-terminus) with NHERF1. In terms of processing, autophosphorylated on tyrosine residues upon ligand binding. Autophosphorylation occurs in trans, i.e. one subunit of the dimeric receptor phosphorylates tyrosine residues on the other subunit. Phosphorylation at Tyr-578, and to a lesser degree, Tyr-580 is important for interaction with SRC. Phosphorylation at Tyr-715 is important for interaction with GRB2. Phosphorylation at Tyr-739 and Tyr-750 is important for interaction with PIK3R1. Phosphorylation at Tyr-750 is important for interaction with NCK1. Phosphorylation at Tyr-770 and Tyr-856 is important for interaction with RASA1/GAP. Phosphorylation at Tyr-856 is important for efficient phosphorylation of PLCG1 and PTPN11, resulting in increased phosphorylation of AKT1, MAPK1/ERK2 and/or MAPK3/ERK1, PDCD6IP/ALIX and STAM, and in increased cell proliferation. Phosphorylation at Tyr-1008 is important for interaction with PTPN11. Phosphorylation at Tyr-1008 and Tyr-1020 is important for interaction with PLCG1. Dephosphorylated by PTPRJ at Tyr-750, Tyr-856, Tyr-1008 and Tyr-1020. Dephosphorylated by PTPN2 at Tyr-578 and Tyr-1020. N-glycosylated. Post-translationally, ubiquitinated. After autophosphorylation, the receptor is polyubiquitinated, leading to its degradation. Weakly expressed in glomerular mesangial cells and interstitial cells. Up-regulated in areas of renal fibrosis. In mice with unilateral ureteral obstruction, increased expression in interstitial cells at day 4 and expression is markedly elevated at day 7 and is maximal at day 14.

The protein localises to the cell membrane. The protein resides in the cytoplasmic vesicle. It localises to the lysosome lumen. The catalysed reaction is L-tyrosyl-[protein] + ATP = O-phospho-L-tyrosyl-[protein] + ADP + H(+). Present in an inactive conformation in the absence of bound ligand. Binding of PDGFB and/or PDGFD leads to dimerization and activation by autophosphorylation on tyrosine residues. Tyrosine-protein kinase that acts as a cell-surface receptor for homodimeric PDGFB and PDGFD and for heterodimers formed by PDGFA and PDGFB, and plays an essential role in the regulation of embryonic development, cell proliferation, survival, differentiation, chemotaxis and migration. Plays an essential role in blood vessel development by promoting proliferation, migration and recruitment of pericytes and smooth muscle cells to endothelial cells. Plays a role in the migration of vascular smooth muscle cells and the formation of neointima at vascular injury sites. Required for normal development of the cardiovascular system. Required for normal recruitment of pericytes (mesangial cells) in the kidney glomerulus, and for normal formation of a branched network of capillaries in kidney glomeruli. Promotes rearrangement of the actin cytoskeleton and the formation of membrane ruffles. Binding of its cognate ligands - homodimeric PDGFB, heterodimers formed by PDGFA and PDGFB or homodimeric PDGFD -leads to the activation of several signaling cascades; the response depends on the nature of the bound ligand and is modulated by the formation of heterodimers between PDGFRA and PDGFRB. Phosphorylates PLCG1, PIK3R1, PTPN11, RASA1/GAP, CBL, SHC1 and NCK1. Activation of PLCG1 leads to the production of the cellular signaling molecules diacylglycerol and inositol 1,4,5-trisphosphate, mobilization of cytosolic Ca(2+) and the activation of protein kinase C. Phosphorylation of PIK3R1, the regulatory subunit of phosphatidylinositol 3-kinase, leads to the activation of the AKT1 signaling pathway. Phosphorylation of SHC1, or of the C-terminus of PTPN11, creates a binding site for GRB2, resulting in the activation of HRAS, RAF1 and down-stream MAP kinases, including MAPK1/ERK2 and/or MAPK3/ERK1. Promotes phosphorylation and activation of SRC family kinases. Promotes phosphorylation of PDCD6IP/ALIX and STAM. Receptor signaling is down-regulated by protein phosphatases that dephosphorylate the receptor and its down-stream effectors, and by rapid internalization of the activated receptor. The chain is Platelet-derived growth factor receptor beta (Pdgfrb) from Mus musculus (Mouse).